A 423-amino-acid chain; its full sequence is Amino acid transporter AVT1J (423 aa).

Helical transmembrane passes span 39 to 59, 63 to 83, 110 to 130, 151 to 171, 186 to 206, 219 to 239, 252 to 272, 297 to 317, 333 to 355, 359 to 381, and 390 to 410; these read CFHG…YALA, WLSL…AILI, VIVS…FLIL, FQGK…SVWL, FASG…GVGF, VATS…FPTL, VMII…VLGY, AIWT…TPII, ASGF…LLPF, LMSL…LCYL, and LGFE…VVIT.

The protein belongs to the amino acid/polyamine transporter 2 family. Amino acid/auxin permease (AAAP) (TC 2.A.18.5) subfamily.

It is found in the membrane. The protein is Amino acid transporter AVT1J of Arabidopsis thaliana (Mouse-ear cress).